Here is a 201-residue protein sequence, read N- to C-terminus: Holliday junction resolvase RecU (201 aa).

Mg(2+)-binding residues include threonine 87, aspartate 89, glutamate 102, and glutamine 121.

The protein belongs to the RecU family. Mg(2+) is required as a cofactor.

The protein resides in the cytoplasm. The enzyme catalyses Endonucleolytic cleavage at a junction such as a reciprocal single-stranded crossover between two homologous DNA duplexes (Holliday junction).. Endonuclease that resolves Holliday junction intermediates in genetic recombination. Cleaves mobile four-strand junctions by introducing symmetrical nicks in paired strands. Promotes annealing of linear ssDNA with homologous dsDNA. Required for DNA repair, homologous recombination and chromosome segregation. The chain is Holliday junction resolvase RecU from Listeria monocytogenes serotype 4b (strain F2365).